A 129-amino-acid polypeptide reads, in one-letter code: uncharacterized protein (129 aa).

The tract at residues 44–63 is disordered; sequence PYRAADRSNDQDNDRSGGNV. Positions 46–58 are enriched in basic and acidic residues; the sequence is RAADRSNDQDNDR. The next 2 membrane-spanning stretches (helical) occupy residues 78–98 and 109–129; these read IISL…VGYI and AWAM…IPFF.

Its subcellular location is the cell membrane. This is an uncharacterized protein from Bacillus subtilis (strain 168).